The primary structure comprises 307 residues: Elongation factor Ts (307 aa).

The tract at residues 80-83 (TDFV) is involved in Mg(2+) ion dislocation from EF-Tu.

Belongs to the EF-Ts family.

The protein localises to the cytoplasm. Associates with the EF-Tu.GDP complex and induces the exchange of GDP to GTP. It remains bound to the aminoacyl-tRNA.EF-Tu.GTP complex up to the GTP hydrolysis stage on the ribosome. The chain is Elongation factor Ts from Rhizorhabdus wittichii (strain DSM 6014 / CCUG 31198 / JCM 15750 / NBRC 105917 / EY 4224 / RW1) (Sphingomonas wittichii).